The sequence spans 205 residues: Recombination protein RecR (205 aa).

A C4-type zinc finger spans residues 59-74 (CARCNTFCEGGLCDIC). The Toprim domain occupies 82–177 (RRLMVVHMPA…KVSRLSQGIP (96 aa)).

Belongs to the RecR family.

May play a role in DNA repair. It seems to be involved in an RecBC-independent recombinational process of DNA repair. It may act with RecF and RecO. The protein is Recombination protein RecR of Neisseria gonorrhoeae (strain ATCC 700825 / FA 1090).